The sequence spans 59 residues: Large ribosomal subunit protein uL30 (59 aa).

The protein belongs to the universal ribosomal protein uL30 family. In terms of assembly, part of the 50S ribosomal subunit.

This chain is Large ribosomal subunit protein uL30, found in Persephonella marina (strain DSM 14350 / EX-H1).